The sequence spans 404 residues: Cysteine desulfurase IscS (404 aa).

Residues 75–76, Asn-155, Gln-183, and 203–205 contribute to the pyridoxal 5'-phosphate site; these read AT and SAH. The residue at position 206 (Lys-206) is an N6-(pyridoxal phosphate)lysine. Thr-243 provides a ligand contact to pyridoxal 5'-phosphate. Cys-328 serves as the catalytic Cysteine persulfide intermediate. Cys-328 is a binding site for [2Fe-2S] cluster.

Belongs to the class-V pyridoxal-phosphate-dependent aminotransferase family. NifS/IscS subfamily. Homodimer. Forms a heterotetramer with IscU, interacts with other sulfur acceptors. It depends on pyridoxal 5'-phosphate as a cofactor.

It is found in the cytoplasm. The enzyme catalyses (sulfur carrier)-H + L-cysteine = (sulfur carrier)-SH + L-alanine. It functions in the pathway cofactor biosynthesis; iron-sulfur cluster biosynthesis. Its function is as follows. Master enzyme that delivers sulfur to a number of partners involved in Fe-S cluster assembly, tRNA modification or cofactor biosynthesis. Catalyzes the removal of elemental sulfur atoms from cysteine to produce alanine. Functions as a sulfur delivery protein for Fe-S cluster synthesis onto IscU, an Fe-S scaffold assembly protein, as well as other S acceptor proteins. This is Cysteine desulfurase IscS from Pseudomonas syringae pv. tomato (strain ATCC BAA-871 / DC3000).